A 249-amino-acid polypeptide reads, in one-letter code: Probable transcriptional regulatory protein Psyc_0938 (249 aa).

Belongs to the TACO1 family.

It is found in the cytoplasm. In Psychrobacter arcticus (strain DSM 17307 / VKM B-2377 / 273-4), this protein is Probable transcriptional regulatory protein Psyc_0938.